Reading from the N-terminus, the 478-residue chain is Membrane-bound lytic murein transglycosylase F (478 aa).

An N-terminal signal peptide occupies residues M1 to V22. The segment at E23–V257 is non-LT domain. The interval K258–K478 is LT domain. E302 is an active-site residue. The segment at K447–K478 is disordered.

The protein in the N-terminal section; belongs to the bacterial solute-binding protein 3 family. In the C-terminal section; belongs to the transglycosylase Slt family.

It is found in the cell outer membrane. It catalyses the reaction Exolytic cleavage of the (1-&gt;4)-beta-glycosidic linkage between N-acetylmuramic acid (MurNAc) and N-acetylglucosamine (GlcNAc) residues in peptidoglycan, from either the reducing or the non-reducing ends of the peptidoglycan chains, with concomitant formation of a 1,6-anhydrobond in the MurNAc residue.. Functionally, murein-degrading enzyme that degrades murein glycan strands and insoluble, high-molecular weight murein sacculi, with the concomitant formation of a 1,6-anhydromuramoyl product. Lytic transglycosylases (LTs) play an integral role in the metabolism of the peptidoglycan (PG) sacculus. Their lytic action creates space within the PG sacculus to allow for its expansion as well as for the insertion of various structures such as secretion systems and flagella. The polypeptide is Membrane-bound lytic murein transglycosylase F (Shewanella oneidensis (strain ATCC 700550 / JCM 31522 / CIP 106686 / LMG 19005 / NCIMB 14063 / MR-1)).